The chain runs to 244 residues: Phosphoadenosine 5'-phosphosulfate reductase (244 aa).

Cys-239 (nucleophile; cysteine thiosulfonate intermediate) is an active-site residue.

This sequence belongs to the PAPS reductase family. CysH subfamily.

It is found in the cytoplasm. It catalyses the reaction [thioredoxin]-disulfide + sulfite + adenosine 3',5'-bisphosphate + 2 H(+) = [thioredoxin]-dithiol + 3'-phosphoadenylyl sulfate. The protein operates within sulfur metabolism; hydrogen sulfide biosynthesis; sulfite from sulfate: step 3/3. Its function is as follows. Catalyzes the formation of sulfite from phosphoadenosine 5'-phosphosulfate (PAPS) using thioredoxin as an electron donor. In Pectobacterium carotovorum subsp. carotovorum (strain PC1), this protein is Phosphoadenosine 5'-phosphosulfate reductase.